Consider the following 390-residue polypeptide: MRYITAGESHGPQLTVILEGVPAGLTLTAEHINKELLRRQKGHGRGRRMQIETDTVEIVSGVRHGMTLGSPITLIVKNDDFKHWTKVMGAEPISEKESKDMKRTITKPRPGHADLNGAIKYGHRDIRNVLERSSARETTVRVAAGAVAKQILSELGVEIAGHVLEIGGVKAKHISNLSIEEIQTITENSPVRCLDKEVEQEMMNAIDNAKSSGDSIGGIVEVIAEGMPIGVGSYVHYDRKLDAKLAGAIMSINAFKGAEIGVGFEAARQPGSKVHDEILWDEEKGYTRRTNNAGGLEGGMTTGMPIIVRGVMKPIPTLYKPLASVDIDTKEAFQASIERSDSCAVPAAGVVAESVVAWELADALVEQFGKDRMELLKQNIMQHNNYAKEF.

2 residues coordinate NADP(+): R39 and R45. FMN-binding positions include R132 to S134, N253 to A254, G298, K313 to T317, and R339.

Belongs to the chorismate synthase family. Homotetramer. FMNH2 serves as cofactor.

It catalyses the reaction 5-O-(1-carboxyvinyl)-3-phosphoshikimate = chorismate + phosphate. Its pathway is metabolic intermediate biosynthesis; chorismate biosynthesis; chorismate from D-erythrose 4-phosphate and phosphoenolpyruvate: step 7/7. Its function is as follows. Catalyzes the anti-1,4-elimination of the C-3 phosphate and the C-6 proR hydrogen from 5-enolpyruvylshikimate-3-phosphate (EPSP) to yield chorismate, which is the branch point compound that serves as the starting substrate for the three terminal pathways of aromatic amino acid biosynthesis. This reaction introduces a second double bond into the aromatic ring system. The protein is Chorismate synthase 2 of Bacillus cereus (strain ATCC 14579 / DSM 31 / CCUG 7414 / JCM 2152 / NBRC 15305 / NCIMB 9373 / NCTC 2599 / NRRL B-3711).